The sequence spans 234 residues: Purine nucleoside phosphorylase DeoD-type (234 aa).

His-5 is a binding site for a purine D-ribonucleoside. Residues Gly-21, Arg-25, Arg-44, and 88–91 (RIGT) each bind phosphate. A purine D-ribonucleoside is bound by residues 180-182 (DME) and 204-205 (SD). Asp-205 (proton donor) is an active-site residue.

This sequence belongs to the PNP/UDP phosphorylase family. As to quaternary structure, homohexamer; trimer of homodimers.

The enzyme catalyses a purine D-ribonucleoside + phosphate = a purine nucleobase + alpha-D-ribose 1-phosphate. It carries out the reaction a purine 2'-deoxy-D-ribonucleoside + phosphate = a purine nucleobase + 2-deoxy-alpha-D-ribose 1-phosphate. In terms of biological role, catalyzes the reversible phosphorolytic breakdown of the N-glycosidic bond in the beta-(deoxy)ribonucleoside molecules, with the formation of the corresponding free purine bases and pentose-1-phosphate. This Buchnera aphidicola subsp. Acyrthosiphon pisum (strain APS) (Acyrthosiphon pisum symbiotic bacterium) protein is Purine nucleoside phosphorylase DeoD-type.